We begin with the raw amino-acid sequence, 107 residues long: Small ribosomal subunit protein uS17 (107 aa).

This sequence belongs to the universal ribosomal protein uS17 family. In terms of assembly, part of the 30S ribosomal subunit.

In terms of biological role, one of the primary rRNA binding proteins, it binds specifically to the 5'-end of 16S ribosomal RNA. In Thermotoga maritima (strain ATCC 43589 / DSM 3109 / JCM 10099 / NBRC 100826 / MSB8), this protein is Small ribosomal subunit protein uS17.